We begin with the raw amino-acid sequence, 81 residues long: Putative sulfur carrier protein VNG_5061C/VNG_5236C/VNG_6059C/VNG_6467C (81 aa).

Cys18 serves as the catalytic Cysteine persulfide intermediate.

This sequence belongs to the sulfur carrier protein TusA family.

This is Putative sulfur carrier protein VNG_5061C/VNG_5236C/VNG_6059C/VNG_6467C from Halobacterium salinarum (strain ATCC 700922 / JCM 11081 / NRC-1) (Halobacterium halobium).